The primary structure comprises 146 residues: D-aminoacyl-tRNA deacylase (146 aa).

The short motif at 137-138 (GP) is the Gly-cisPro motif, important for rejection of L-amino acids element.

The protein belongs to the DTD family. Homodimer.

Its subcellular location is the cytoplasm. It carries out the reaction glycyl-tRNA(Ala) + H2O = tRNA(Ala) + glycine + H(+). It catalyses the reaction a D-aminoacyl-tRNA + H2O = a tRNA + a D-alpha-amino acid + H(+). In terms of biological role, an aminoacyl-tRNA editing enzyme that deacylates mischarged D-aminoacyl-tRNAs. Also deacylates mischarged glycyl-tRNA(Ala), protecting cells against glycine mischarging by AlaRS. Acts via tRNA-based rather than protein-based catalysis; rejects L-amino acids rather than detecting D-amino acids in the active site. By recycling D-aminoacyl-tRNA to D-amino acids and free tRNA molecules, this enzyme counteracts the toxicity associated with the formation of D-aminoacyl-tRNA entities in vivo and helps enforce protein L-homochirality. The polypeptide is D-aminoacyl-tRNA deacylase (Bacillus thuringiensis (strain Al Hakam)).